The chain runs to 414 residues: Tryptophan synthase beta chain (414 aa).

Positions 1–26 (MVSTFSRKDQNYKNDDLNQPSKEGRF) are enriched in basic and acidic residues. A disordered region spans residues 1-27 (MVSTFSRKDQNYKNDDLNQPSKEGRFG). Lys109 carries the post-translational modification N6-(pyridoxal phosphate)lysine.

Belongs to the TrpB family. As to quaternary structure, tetramer of two alpha and two beta chains. Requires pyridoxal 5'-phosphate as cofactor.

The enzyme catalyses (1S,2R)-1-C-(indol-3-yl)glycerol 3-phosphate + L-serine = D-glyceraldehyde 3-phosphate + L-tryptophan + H2O. Its pathway is amino-acid biosynthesis; L-tryptophan biosynthesis; L-tryptophan from chorismate: step 5/5. The beta subunit is responsible for the synthesis of L-tryptophan from indole and L-serine. The polypeptide is Tryptophan synthase beta chain (Prochlorococcus marinus (strain MIT 9301)).